The sequence spans 393 residues: Small RNA 2'-O-methyltransferase (393 aa).

S-adenosyl-L-methionine contacts are provided by Tyr36, Gly55, Asp78, Lys83, Val115, and Ile131. 4 residues coordinate Mg(2+): Glu132, Glu135, His136, and His181. The disordered stretch occupies residues 286–307 (HLPRRKEQAGERGDKPKDIGGS). Residues 290–305 (RKEQAGERGDKPKDIG) show a composition bias toward basic and acidic residues.

The protein belongs to the methyltransferase superfamily. HEN1 family. Requires Mg(2+) as cofactor.

The protein resides in the cytoplasm. It carries out the reaction small RNA 3'-end nucleotide + S-adenosyl-L-methionine = small RNA 3'-end 2'-O-methylnucleotide + S-adenosyl-L-homocysteine + H(+). Methyltransferase that adds a 2'-O-methyl group at the 3'-end of piRNAs, a class of 24 to 30 nucleotide RNAs that are generated by a Dicer-independent mechanism and are primarily derived from transposons and other repeated sequence elements. This probably protects the 3'-end of piRNAs from uridylation activity and subsequent degradation. Stabilization of piRNAs is essential for gametogenesis. The chain is Small RNA 2'-O-methyltransferase (HENMT1) from Homo sapiens (Human).